Here is a 158-residue protein sequence, read N- to C-terminus: SsrA-binding protein (158 aa).

This sequence belongs to the SmpB family.

It localises to the cytoplasm. Its function is as follows. Required for rescue of stalled ribosomes mediated by trans-translation. Binds to transfer-messenger RNA (tmRNA), required for stable association of tmRNA with ribosomes. tmRNA and SmpB together mimic tRNA shape, replacing the anticodon stem-loop with SmpB. tmRNA is encoded by the ssrA gene; the 2 termini fold to resemble tRNA(Ala) and it encodes a 'tag peptide', a short internal open reading frame. During trans-translation Ala-aminoacylated tmRNA acts like a tRNA, entering the A-site of stalled ribosomes, displacing the stalled mRNA. The ribosome then switches to translate the ORF on the tmRNA; the nascent peptide is terminated with the 'tag peptide' encoded by the tmRNA and targeted for degradation. The ribosome is freed to recommence translation, which seems to be the essential function of trans-translation. This is SsrA-binding protein from Parafrankia sp. (strain EAN1pec).